A 39-amino-acid chain; its full sequence is Beta-theraphotoxin-Cm2a (39 aa).

Cystine bridges form between Cys7–Cys21, Cys14–Cys26, and Cys20–Cys33. At Phe39 the chain carries Phenylalanine amide.

As to expression, expressed by the venom gland.

The protein resides in the secreted. Functionally, inhibits mammalian voltage-gated sodium channel subtypes Nav1.5/SCN5A and Nav1.8/SCN10A by shifting the voltage dependence of channel activation to more depolarized potentials and by blocking the inward component of the sodium current. In vivo, this toxin causes erect, elevated tail, initial partial ataxia, followed by recovery over approximately 1 hour after injection and the progressive development of shaking. Although paralysis subsides, the body tremors never cease and persist until the end of the experiment. The protein is Beta-theraphotoxin-Cm2a of Ceratogyrus marshalli (Straighthorned baboon tarantula).